The sequence spans 347 residues: NADH-ubiquinone oxidoreductase chain 2 (347 aa).

The next 11 helical transmembrane spans lie at 3–23 (PLIF…VMTT), 25–45 (HWVM…PILM), 59–79 (YFLT…INLT), 96–116 (IIMT…FWVP), 122–142 (VQLS…MSIL), 149–169 (INLD…GWGG), 178–198 (ILAY…VYNP), 201–221 (ALLN…MLMV), 237–257 (MPLL…LPPL), 274–294 (DSMI…YFYM), and 326–346 (LSPL…LALL).

This sequence belongs to the complex I subunit 2 family. Core subunit of respiratory chain NADH dehydrogenase (Complex I) which is composed of 45 different subunits. Interacts with TMEM242.

It is found in the mitochondrion inner membrane. It carries out the reaction a ubiquinone + NADH + 5 H(+)(in) = a ubiquinol + NAD(+) + 4 H(+)(out). In terms of biological role, core subunit of the mitochondrial membrane respiratory chain NADH dehydrogenase (Complex I) which catalyzes electron transfer from NADH through the respiratory chain, using ubiquinone as an electron acceptor. Essential for the catalytic activity and assembly of complex I. In Nyctimene aello (Broad-striped tube-nosed fruit bat), this protein is NADH-ubiquinone oxidoreductase chain 2.